The chain runs to 362 residues: Peptide chain release factor 1 (362 aa).

An N5-methylglutamine modification is found at glutamine 236.

The protein belongs to the prokaryotic/mitochondrial release factor family. Methylated by PrmC. Methylation increases the termination efficiency of RF1.

Its subcellular location is the cytoplasm. Its function is as follows. Peptide chain release factor 1 directs the termination of translation in response to the peptide chain termination codons UAG and UAA. The polypeptide is Peptide chain release factor 1 (Lactobacillus helveticus (strain DPC 4571)).